A 402-amino-acid polypeptide reads, in one-letter code: Subtilisin-like protease 9 (402 aa).

An N-terminal signal peptide occupies residues 1 to 18 (MGFFRILFSLSLCALSLA). Residues 19–120 (IPSKLIGLEN…VEVDRVVKLD (102 aa)) constitute a propeptide that is removed on maturation. The Inhibitor I9 domain maps to 36–119 (SYIVVMKSAV…YVEVDRVVKL (84 aa)). Residues 130-402 (SWGLGRISHR…KKLLYNGSGA (273 aa)) enclose the Peptidase S8 domain. Residues aspartate 162 and histidine 193 each act as charge relay system in the active site. Asparagine 254 carries an N-linked (GlcNAc...) asparagine glycan. Serine 348 (charge relay system) is an active-site residue. Residues asparagine 390 and asparagine 398 are each glycosylated (N-linked (GlcNAc...) asparagine).

The protein belongs to the peptidase S8 family.

It localises to the secreted. Functionally, secreted subtilisin-like serine protease with keratinolytic activity that contributes to pathogenicity. The sequence is that of Subtilisin-like protease 9 (SUB9) from Arthroderma gypseum (strain ATCC MYA-4604 / CBS 118893) (Microsporum gypseum).